Here is a 465-residue protein sequence, read N- to C-terminus: tRNA modification GTPase MnmE (465 aa).

(6S)-5-formyl-5,6,7,8-tetrahydrofolate is bound by residues Arg-21, Glu-85, and Lys-124. The region spanning 220 to 387 (GVPVAIIGET…LQQRLVAAAH (168 aa)) is the TrmE-type G domain. Residue Asn-230 participates in K(+) binding. GTP contacts are provided by residues 230–235 (NAGKST), 249–255 (SDIHGTT), and 274–277 (DTAG). Ser-234 contributes to the Mg(2+) binding site. Residues Ser-249, Ile-251, and Thr-254 each coordinate K(+). Thr-255 is a binding site for Mg(2+). Lys-465 lines the (6S)-5-formyl-5,6,7,8-tetrahydrofolate pocket.

It belongs to the TRAFAC class TrmE-Era-EngA-EngB-Septin-like GTPase superfamily. TrmE GTPase family. Homodimer. Heterotetramer of two MnmE and two MnmG subunits. It depends on K(+) as a cofactor.

Its subcellular location is the cytoplasm. Exhibits a very high intrinsic GTPase hydrolysis rate. Involved in the addition of a carboxymethylaminomethyl (cmnm) group at the wobble position (U34) of certain tRNAs, forming tRNA-cmnm(5)s(2)U34. The polypeptide is tRNA modification GTPase MnmE (Bacteroides fragilis (strain ATCC 25285 / DSM 2151 / CCUG 4856 / JCM 11019 / LMG 10263 / NCTC 9343 / Onslow / VPI 2553 / EN-2)).